Consider the following 87-residue polypeptide: Small ribosomal subunit protein uS17 (87 aa).

It belongs to the universal ribosomal protein uS17 family. As to quaternary structure, part of the 30S ribosomal subunit.

In terms of biological role, one of the primary rRNA binding proteins, it binds specifically to the 5'-end of 16S ribosomal RNA. The polypeptide is Small ribosomal subunit protein uS17 (Geobacillus kaustophilus (strain HTA426)).